Consider the following 563-residue polypeptide: Tripeptidyl-peptidase 1 (563 aa).

The signal sequence occupies residues 1-19; sequence MGLQACLLGLFALILSGKC. A propeptide spans 20 to 195 (removed in mature form); sequence SYSPEPDQRR…PEPQVTGTVG (176 aa). An intrachain disulfide couples Cys-111 to Cys-122. Residues 199 to 563 form the Peptidase S53 domain; sequence GVTPSVIRKR…PALLKTLLNP (365 aa). N-linked (GlcNAc...) asparagine glycosylation is found at Asn-210 and Asn-222. Active-site charge relay system residues include Glu-272 and Asp-276. N-linked (GlcNAc...) asparagine glycosylation is found at Asn-286, Asn-313, and Asn-443. 2 disulfides stabilise this stretch: Cys-365-Cys-526 and Cys-522-Cys-537. Catalysis depends on Ser-475, which acts as the Charge relay system. Residues Asp-517 and Val-518 each contribute to the Ca(2+) site. Residues Gly-539, Gly-541, and Asp-543 each contribute to the Ca(2+) site.

As to quaternary structure, monomer. Interacts with CLN5. Interacts with CLN3. Ca(2+) serves as cofactor. Post-translationally, activated by autocatalytic proteolytical processing upon acidification. N-glycosylation is required for processing and activity.

It is found in the lysosome. Its subcellular location is the melanosome. It carries out the reaction Release of an N-terminal tripeptide from a polypeptide, but also has endopeptidase activity.. Functionally, lysosomal serine protease with tripeptidyl-peptidase I activity. May act as a non-specific lysosomal peptidase which generates tripeptides from the breakdown products produced by lysosomal proteinases. Requires substrates with an unsubstituted N-terminus. In Macaca fascicularis (Crab-eating macaque), this protein is Tripeptidyl-peptidase 1 (TPP1).